The sequence spans 461 residues: Fumarate hydratase class II (461 aa).

Residues 97-99 (SGT), 127-130 (HPND), 137-139 (SSN), and threonine 185 contribute to the substrate site. Catalysis depends on histidine 186, which acts as the Proton donor/acceptor. Residue serine 316 is part of the active site. Substrate contacts are provided by residues serine 317 and 322–324 (KVN).

It belongs to the class-II fumarase/aspartase family. Fumarase subfamily. As to quaternary structure, homotetramer.

The protein localises to the cytoplasm. It catalyses the reaction (S)-malate = fumarate + H2O. It functions in the pathway carbohydrate metabolism; tricarboxylic acid cycle; (S)-malate from fumarate: step 1/1. Functionally, involved in the TCA cycle. Catalyzes the stereospecific interconversion of fumarate to L-malate. The polypeptide is Fumarate hydratase class II (Staphylococcus epidermidis (strain ATCC 35984 / DSM 28319 / BCRC 17069 / CCUG 31568 / BM 3577 / RP62A)).